We begin with the raw amino-acid sequence, 344 residues long: Anthranilate phosphoribosyltransferase (344 aa).

Residues Gly86, 89-90, Thr94, 96-99, 114-122, and Ser126 contribute to the 5-phospho-alpha-D-ribose 1-diphosphate site; these read GD, NIST, and KHGNKSASG. Gly86 contacts anthranilate. Mg(2+) is bound at residue Ser98. An anthranilate-binding site is contributed by Asn117. An anthranilate-binding site is contributed by Arg172. Residues Asp231 and Glu232 each coordinate Mg(2+).

The protein belongs to the anthranilate phosphoribosyltransferase family. Homodimer. Mg(2+) serves as cofactor.

The catalysed reaction is N-(5-phospho-beta-D-ribosyl)anthranilate + diphosphate = 5-phospho-alpha-D-ribose 1-diphosphate + anthranilate. It functions in the pathway amino-acid biosynthesis; L-tryptophan biosynthesis; L-tryptophan from chorismate: step 2/5. In terms of biological role, catalyzes the transfer of the phosphoribosyl group of 5-phosphorylribose-1-pyrophosphate (PRPP) to anthranilate to yield N-(5'-phosphoribosyl)-anthranilate (PRA). This is Anthranilate phosphoribosyltransferase from Prochlorococcus marinus (strain MIT 9215).